Consider the following 262-residue polypeptide: Hydroxyethylthiazole kinase (262 aa).

Met-50 lines the substrate pocket. ATP contacts are provided by Arg-125 and Thr-171. Gly-198 lines the substrate pocket.

This sequence belongs to the Thz kinase family. Mg(2+) is required as a cofactor.

It carries out the reaction 5-(2-hydroxyethyl)-4-methylthiazole + ATP = 4-methyl-5-(2-phosphooxyethyl)-thiazole + ADP + H(+). It participates in cofactor biosynthesis; thiamine diphosphate biosynthesis; 4-methyl-5-(2-phosphoethyl)-thiazole from 5-(2-hydroxyethyl)-4-methylthiazole: step 1/1. Catalyzes the phosphorylation of the hydroxyl group of 4-methyl-5-beta-hydroxyethylthiazole (THZ). This is Hydroxyethylthiazole kinase from Escherichia coli O6:H1 (strain CFT073 / ATCC 700928 / UPEC).